A 27-amino-acid chain; its full sequence is ARRRRRHASTKLKRRRRRRRHGKKSHK.

The tract at residues Ala1–Lys27 is disordered.

As to expression, testis.

The protein localises to the nucleus. It is found in the chromosome. Its function is as follows. Protamines substitute for histones in the chromatin of sperm during the haploid phase of spermatogenesis. They compact sperm DNA into a highly condensed, stable and inactive complex. The polypeptide is Protamine-A (Acipenser stellatus (Sevruga)).